The following is a 257-amino-acid chain: MKHSKKTYDSFQDELEDYIKVQKARGLEPKTCFRKMREDYLETYGYKEEVDSRPRCRMFEQRLPYGTVQTYPRSCSISQRVEKQLPQWLPAHDSRLRLDSLSYSQFTRDCFSGKPVPPNLSQHESNCSSYSVESGVYRHLSSENNTSAHQASYKHIHQKRKRHTEEGREKPEEERPKHKRKKACEEIDLDKYKSIQTSKTEAETVRVSTEKLKNRKEKRSRDVASKKEERKRRKEKKEQGQERTEEEMLWDQSILGF.

The interval 145–257 (NTSAHQASYK…MLWDQSILGF (113 aa)) is disordered. Basic residues predominate over residues 152–162 (SYKHIHQKRKR). 4 stretches are compositionally biased toward basic and acidic residues: residues 163–176 (HTEE…EERP), 183–193 (ACEEIDLDKYK), 200–212 (TEAE…TEKL), and 219–228 (RSRDVASKKE). Positions 210-248 (EKLKNRKEKRSRDVASKKEERKRRKEKKEQGQERTEEEM) form a coiled coil.

This Bos taurus (Bovine) protein is Lysine-rich coiled-coil protein 1 (KRCC1).